The following is a 377-amino-acid chain: MNTPALLVLADGSVFHGTSIGYEGSASGEVVFNTSMTGYQEILTDPSYCKQIVTLTYPHIGNTGTNAEDEESRSVYAAGLIIRDLPLLHSNFRASESLHDYLVRNETVAIADIDTRRLTMLLREKGAQGGAILTGADATVEKAQELIAAFGSMVGKDLAKEVSCTETYEWTEGEWELGKGFVTPDKQPYHVVAYDFGVKTNILRMLASRGCRLTVVPAQTSAEDVLALNPDGVFLSNGPGDPEPCTYGIEAVQKLMESGKPIFGICLGHQLISLAIGAKTLKMRFSHHGANHPVQDLDSGKVVITSQNHGFAVDADTLPANARITHKSLFDNTLQGIELTDKPVSCFQGHPEASPGPQDVGYLSDKFIGNMKAAKQA.

The tract at residues 1–186 (MNTPALLVLA…LGKGFVTPDK (186 aa)) is CPSase. Positions 47, 238, and 240 each coordinate L-glutamine. Positions 190–377 (HVVAYDFGVK…IGNMKAAKQA (188 aa)) constitute a Glutamine amidotransferase type-1 domain. The active-site Nucleophile is Cys-266. Residues Leu-267, Gln-270, Asn-308, Gly-310, and Phe-311 each contribute to the L-glutamine site. Residues His-350 and Glu-352 contribute to the active site.

It belongs to the CarA family. As to quaternary structure, composed of two chains; the small (or glutamine) chain promotes the hydrolysis of glutamine to ammonia, which is used by the large (or ammonia) chain to synthesize carbamoyl phosphate. Tetramer of heterodimers (alpha,beta)4.

The enzyme catalyses hydrogencarbonate + L-glutamine + 2 ATP + H2O = carbamoyl phosphate + L-glutamate + 2 ADP + phosphate + 2 H(+). It carries out the reaction L-glutamine + H2O = L-glutamate + NH4(+). It participates in amino-acid biosynthesis; L-arginine biosynthesis; carbamoyl phosphate from bicarbonate: step 1/1. Its pathway is pyrimidine metabolism; UMP biosynthesis via de novo pathway; (S)-dihydroorotate from bicarbonate: step 1/3. Functionally, small subunit of the glutamine-dependent carbamoyl phosphate synthetase (CPSase). CPSase catalyzes the formation of carbamoyl phosphate from the ammonia moiety of glutamine, carbonate, and phosphate donated by ATP, constituting the first step of 2 biosynthetic pathways, one leading to arginine and/or urea and the other to pyrimidine nucleotides. The small subunit (glutamine amidotransferase) binds and cleaves glutamine to supply the large subunit with the substrate ammonia. The sequence is that of Carbamoyl phosphate synthase small chain from Neisseria gonorrhoeae.